Reading from the N-terminus, the 526-residue chain is mRNA export factor ICP27 homolog (526 aa).

The Zn(2+) site is built by C239, H344, C346, and C351. A CHC2-type zinc finger spans residues 239–351 (CVFNDNGHGD…NNHQCDDIGC (113 aa)).

This sequence belongs to the HHV-1 ICP27 protein family.

It is found in the virion tegument. The protein resides in the virion. The protein localises to the host nucleus. It localises to the host cytoplasm. In terms of biological role, immediate early (EI) protein that plays many roles during productive infection including regulation of viral gene expression and nuclear export of intronless viral RNAs. This chain is mRNA export factor ICP27 homolog, found in Human herpesvirus 7 (strain JI) (HHV-7).